A 375-amino-acid chain; its full sequence is MMSTIYRHLSTARPALTKYATNAAVKSTTASSEASTLGALQYALSLDEPSHSWTKSQLKEIYHTPLLELTHAAQLQHRKWHDPTKVQLCTLMNIKSGGCSEDCKYCAQSSRNDTGLKAEKMVKVDEVIKEAEEAKRNGSTRFCLGAAWRDMKGRKSAMKRIQEMVTKVNDMGLETCVTLGMVDQDQAKQLKDAGLTAYNHNIDTSREHYSKVITTRTYDDRLQTIKNVQESGIKACTGGILGLGESEDDHIGFIYTLSNMSPHPESLPINRLVAIKGTPMAEELADPKSKKLQFDEILRTIATARIVMPKAIIRLAAGRYTMKETEQFVCFMAGCNSIFTGKKMLTTMCNGWDEDKAMLAKWGLQPMEAFKYDRS.

Residues 1 to 16 constitute a mitochondrion transit peptide; sequence MMSTIYRHLSTARPAL. The region spanning 81–310 is the Radical SAM core domain; sequence HDPTKVQLCT…IATARIVMPK (230 aa). [4Fe-4S] cluster contacts are provided by cysteine 99, cysteine 103, and cysteine 106. The [2Fe-2S] cluster site is built by cysteine 143, cysteine 176, cysteine 236, and arginine 314.

It belongs to the radical SAM superfamily. Biotin synthase family. Requires [4Fe-4S] cluster as cofactor. [2Fe-2S] cluster is required as a cofactor.

The protein localises to the mitochondrion. It carries out the reaction (4R,5S)-dethiobiotin + (sulfur carrier)-SH + 2 reduced [2Fe-2S]-[ferredoxin] + 2 S-adenosyl-L-methionine = (sulfur carrier)-H + biotin + 2 5'-deoxyadenosine + 2 L-methionine + 2 oxidized [2Fe-2S]-[ferredoxin]. Its pathway is cofactor biosynthesis; biotin biosynthesis; biotin from 7,8-diaminononanoate: step 2/2. The sequence is that of Biotin synthase, mitochondrial (BIO2) from Saccharomyces cerevisiae (strain ATCC 204508 / S288c) (Baker's yeast).